A 795-amino-acid polypeptide reads, in one-letter code: Antibiotic resistant DNA gyrase subunit B (795 aa).

One can recognise a Toprim domain in the interval 421-536 (SELYLVEGNS…RGYIYIAQPP (116 aa)). Mg(2+) is bound by residues Glu-427, Asp-501, and Asp-503.

The protein belongs to the type II topoisomerase GyrB family. In terms of assembly, heterotetramer, composed of two GyrA and two GyrB chains. In the heterotetramer, GyrA contains the active site tyrosine that forms a transient covalent intermediate with DNA, while GyrB binds cofactors and catalyzes ATP hydrolysis. Mg(2+) is required as a cofactor. It depends on Mn(2+) as a cofactor. The cofactor is Ca(2+).

The protein localises to the cytoplasm. It catalyses the reaction ATP-dependent breakage, passage and rejoining of double-stranded DNA.. In terms of biological role, a type II topoisomerase that negatively supercoils closed circular double-stranded (ds) DNA in an ATP-dependent manner to modulate DNA topology and maintain chromosomes in an underwound state. Negative supercoiling favors strand separation, and DNA replication, transcription, recombination and repair, all of which involve strand separation. Also able to catalyze the interconversion of other topological isomers of dsDNA rings, including catenanes and knotted rings. Type II topoisomerases break and join 2 DNA strands simultaneously in an ATP-dependent manner. In Neisseria gonorrhoeae, this protein is Antibiotic resistant DNA gyrase subunit B.